The primary structure comprises 243 residues: UPF0758 protein SYNPCC7002_A0220 (243 aa).

Residues I112–L235 enclose the MPN domain. Zn(2+) contacts are provided by H184, H186, and D197. The JAMM motif motif lies at H184–D197.

This sequence belongs to the UPF0758 family.

The protein is UPF0758 protein SYNPCC7002_A0220 of Picosynechococcus sp. (strain ATCC 27264 / PCC 7002 / PR-6) (Agmenellum quadruplicatum).